The sequence spans 486 residues: Hexokinase-2 (486 aa).

Position 15 is a phosphoserine (S15). In terms of domain architecture, Hexokinase spans 21-469 (KELMQQIENF…SGAGAAVIAA (449 aa)). T38 carries the phosphothreonine modification. Positions 75–209 (TGKESGDFLA…NIPIEVVALI (135 aa)) are hexokinase small subdomain. ATP-binding positions include 86–91 (DLGGTN) and K111. The residue at position 158 (S158) is a Phosphoserine. Substrate is bound by residues S158, 175–176 (TK), 210–211 (ND), and N237. The tract at residues 210–458 (NDTTGTLVAS…YPIKIVPAED (249 aa)) is hexokinase large subdomain. S245 carries the phosphoserine modification. E269 is a binding site for substrate. S272 is subject to Phosphoserine. Substrate is bound at residue E302. ATP contacts are provided by residues 307-308 (GY), 344-348 (TSYPA), and 419-423 (SVYNR).

Belongs to the hexokinase family. In terms of assembly, homodimer.

It catalyses the reaction a D-hexose + ATP = a D-hexose 6-phosphate + ADP + H(+). The catalysed reaction is D-fructose + ATP = D-fructose 6-phosphate + ADP + H(+). The enzyme catalyses D-glucose + ATP = D-glucose 6-phosphate + ADP + H(+). Its pathway is carbohydrate metabolism; hexose metabolism. It functions in the pathway carbohydrate degradation; glycolysis; D-glyceraldehyde 3-phosphate and glycerone phosphate from D-glucose: step 1/4. Subject to allosteric control. Substrate inhibition by ATP. Catalyzes the phosphorylation of hexose, such as D-glucose and D-fructose, to hexose 6-phosphate (D-glucose 6-phosphate and D-fructose 6-phosphate, respectively). Mediates the initial step of glycolysis by catalyzing phosphorylation of D-glucose to D-glucose 6-phosphate. The protein is Hexokinase-2 (HXK2) of Saccharomyces cerevisiae (strain ATCC 204508 / S288c) (Baker's yeast).